We begin with the raw amino-acid sequence, 92 residues long: MPSKKRAGNKKKGSQSNFAKLSIFQPNKYKFKKTCPLSAKGAPEVDYKNIRLLKKYMSENGKILPSRITNVSQKKQRELSLSIKRARNLALI.

It belongs to the bacterial ribosomal protein bS18 family. Part of the 30S ribosomal subunit. Forms a tight heterodimer with protein bS6.

Its function is as follows. Binds as a heterodimer with protein bS6 to the central domain of the 16S rRNA, where it helps stabilize the platform of the 30S subunit. The chain is Small ribosomal subunit protein bS18 from Pelagibacter ubique (strain HTCC1062).